Consider the following 309-residue polypeptide: tRNA dimethylallyltransferase (309 aa).

Residue 9 to 16 participates in ATP binding; it reads GPTAVGKT. Position 11–16 (11–16) interacts with substrate; sequence TAVGKT. An interaction with substrate tRNA region spans residues 34–37; it reads DSMQ.

It belongs to the IPP transferase family. Monomer. It depends on Mg(2+) as a cofactor.

The enzyme catalyses adenosine(37) in tRNA + dimethylallyl diphosphate = N(6)-dimethylallyladenosine(37) in tRNA + diphosphate. Its function is as follows. Catalyzes the transfer of a dimethylallyl group onto the adenine at position 37 in tRNAs that read codons beginning with uridine, leading to the formation of N6-(dimethylallyl)adenosine (i(6)A). The polypeptide is tRNA dimethylallyltransferase (Clostridium kluyveri (strain NBRC 12016)).